The chain runs to 514 residues: Serine--tRNA ligase, cytoplasmic (514 aa).

Residue M1 is modified to N-acetylmethionine. The tract at residues 9-61 is interaction with tRNA; sequence RVDKGGDPALIRESQEKRFKDPGLVDQLVKADSEWRRCRFRADNLNKLKNLCS. S241 carries the post-translational modification Phosphoserine. 2 residues coordinate L-serine: T271 and R302. ATP contacts are provided by residues 302-304 and 318-321; these read RQE and VHQF. K323 is modified (N6-acetyllysine). E325 contacts L-serine. 391 to 394 contacts ATP; that stretch reads ELVS. N427 provides a ligand contact to L-serine. Residues 475–514 form a disordered region; it reads PIDQEPSKKQKKQHEGSKKKGAARDVALESQLQNMEVTDA. Residues 479–501 show a composition bias toward basic and acidic residues; the sequence is EPSKKQKKQHEGSKKKGAARDVA. A Nuclear localization signal motif is present at residues 482–494; the sequence is KKQKKQHEGSKKK. Residues 504–514 are compositionally biased toward polar residues; that stretch reads SQLQNMEVTDA.

Belongs to the class-II aminoacyl-tRNA synthetase family. Type-1 seryl-tRNA synthetase subfamily. In terms of assembly, homodimer. The tRNA molecule may bind across the dimer. Interacts with SIRT2. Interacts with METTL6; interaction is required for the tRNA N(3)-methylcytidine methyltransferase activity of METTL6.

The protein localises to the cytoplasm. The protein resides in the nucleus. The catalysed reaction is tRNA(Ser) + L-serine + ATP = L-seryl-tRNA(Ser) + AMP + diphosphate + H(+). It carries out the reaction tRNA(Sec) + L-serine + ATP = L-seryl-tRNA(Sec) + AMP + diphosphate + H(+). It functions in the pathway aminoacyl-tRNA biosynthesis; selenocysteinyl-tRNA(Sec) biosynthesis; L-seryl-tRNA(Sec) from L-serine and tRNA(Sec): step 1/1. Its function is as follows. Catalyzes the attachment of serine to tRNA(Ser) in a two-step reaction: serine is first activated by ATP to form Ser-AMP and then transferred to the acceptor end of tRNA(Ser). Is probably also able to aminoacylate tRNA(Sec) with serine, to form the misacylated tRNA L-seryl-tRNA(Sec), which will be further converted into selenocysteinyl-tRNA(Sec). In the nucleus, binds to the VEGFA core promoter and prevents MYC binding and transcriptional activation by MYC. Recruits SIRT2 to the VEGFA promoter, promoting deacetylation of histone H4 at 'Lys-16' (H4K16). Thereby, inhibits the production of VEGFA and sprouting angiogenesis mediated by VEGFA. The chain is Serine--tRNA ligase, cytoplasmic (SARS1) from Bos taurus (Bovine).